The chain runs to 443 residues: Chromosomal replication initiator protein DnaA (443 aa).

Positions 1–73 (MYGDHRQIWE…YDAASKATNK (73 aa)) are domain I, interacts with DnaA modulators. The interval 73–106 (KLYEIKILSEDEEEYREIKESIEKENLTESTTLS) is domain II. Positions 107–323 (TLNPKYTFDT…GALIRIVAFS (217 aa)) are domain III, AAA+ region. Residues G151, G153, K154, and T155 each contribute to the ATP site. The tract at residues 324–443 (NLTKANIDLE…EELKKRIKGY (120 aa)) is domain IV, binds dsDNA.

The protein belongs to the DnaA family. Oligomerizes as a right-handed, spiral filament on DNA at oriC.

It localises to the cytoplasm. Functionally, plays an essential role in the initiation and regulation of chromosomal replication. ATP-DnaA binds to the origin of replication (oriC) to initiate formation of the DNA replication initiation complex once per cell cycle. Binds the DnaA box (a 9 base pair repeat at the origin) and separates the double-stranded (ds)DNA. Forms a right-handed helical filament on oriC DNA; dsDNA binds to the exterior of the filament while single-stranded (ss)DNA is stabiized in the filament's interior. The ATP-DnaA-oriC complex binds and stabilizes one strand of the AT-rich DNA unwinding element (DUE), permitting loading of DNA polymerase. After initiation quickly degrades to an ADP-DnaA complex that is not apt for DNA replication. Binds acidic phospholipids. The protein is Chromosomal replication initiator protein DnaA of Thermoanaerobacter pseudethanolicus (strain ATCC 33223 / 39E) (Clostridium thermohydrosulfuricum).